The chain runs to 339 residues: Biotin synthase (339 aa).

The Radical SAM core domain occupies 51–278 (TEVELATLLS…KARVRLSAGR (228 aa)). Cys-66, Cys-70, and Cys-73 together coordinate [4Fe-4S] cluster. Residues Cys-110, Cys-141, Cys-201, and Arg-273 each contribute to the [2Fe-2S] cluster site.

The protein belongs to the radical SAM superfamily. Biotin synthase family. Homodimer. It depends on [4Fe-4S] cluster as a cofactor. The cofactor is [2Fe-2S] cluster.

It carries out the reaction (4R,5S)-dethiobiotin + (sulfur carrier)-SH + 2 reduced [2Fe-2S]-[ferredoxin] + 2 S-adenosyl-L-methionine = (sulfur carrier)-H + biotin + 2 5'-deoxyadenosine + 2 L-methionine + 2 oxidized [2Fe-2S]-[ferredoxin]. It functions in the pathway cofactor biosynthesis; biotin biosynthesis; biotin from 7,8-diaminononanoate: step 2/2. Its function is as follows. Catalyzes the conversion of dethiobiotin (DTB) to biotin by the insertion of a sulfur atom into dethiobiotin via a radical-based mechanism. This is Biotin synthase from Janthinobacterium sp. (strain Marseille) (Minibacterium massiliensis).